Here is a 747-residue protein sequence, read N- to C-terminus: Flowering time control protein FCA (747 aa).

Residues 80 to 101 (YSVRPTTPPVQQPLSGQKRGYP) are disordered. RRM domains are found at residues 120-201 (VKLF…YADG) and 211-291 (FKLF…FAEP). Residues 291 to 301 (PKRPKPGESRE) are compositionally biased toward basic and acidic residues. The segment at 291–503 (PKRPKPGESR…QQPLQKMQHP (213 aa)) is disordered. Composition is skewed to polar residues over residues 320-353 (RPTSNFGDSSGDVSHTNPWRPATSRNVGPPSNTG) and 395-406 (SSSATLQQQNRA). Over residues 448-460 (SSQLPTSQLPPQQ) the composition is skewed to low complexity. Residues 461 to 498 (NISRATAPQTPLNINLRPTTVSSATVQFPPRSQQQPLQ) are compositionally biased toward polar residues. Residues 591–624 (GSVKCTWTEHTSPDGFKYYYNGLTGESKWEKPEE) enclose the WW domain. The span at 630–641 (REQQKQQQHQEK) shows a compositional bias: basic and acidic residues. Disordered regions lie at residues 630–707 (REQQ…SGIG) and 722–747 (AASMNDISRTQQSRQSPQELMWKNKA). Over residues 642-673 (PTIQQSQTQLQPLQQQPQQVQQQYQGQQLQQP) the composition is skewed to low complexity. Composition is skewed to polar residues over residues 674-707 (FYSSLYPTPGASHNTQYPSLPVGQNSQFPMSGIG) and 726-739 (NDISRTQQSRQSPQ).

In terms of assembly, interacts (via C-terminus) with SWI3B and (via WW domain) with FY (via PPLPP motifs). In terms of tissue distribution, constitutively expressed, but the negative feedback maintains the active isoform a low level throughout much of the plant, except in meristematic cells at a specific time in development.

It localises to the nucleus. In terms of biological role, plays a major role in the promotion of the transition of the vegetative meristem to reproductive development. Plays a role in the regulation of flowering time in the autonomous flowering pathway by decreasing FLOWERING LOCUS C mRNA levels. Required for RNA-mediated chromatin silencing of a range of loci in the genome. Cotranscriptionally recognizes aberrant RNA and marks it for silencing. Controls alternative cleavage and polyadenylation on pre-mRNAs and antisense RNAs. Acts redundantly with FPA to prevent the expression of distally polyadenylated antisense RNAs at the FLC locus. In Arabidopsis thaliana (Mouse-ear cress), this protein is Flowering time control protein FCA (FCA).